We begin with the raw amino-acid sequence, 110 residues long: Insulin (110 aa).

A signal peptide spans Met-1–Ala-24. 3 disulfide bridges follow: Cys-31/Cys-96, Cys-43/Cys-109, and Cys-95/Cys-100. Positions Glu-57 to Gln-87 are cleaved as a propeptide — c peptide.

Belongs to the insulin family. As to quaternary structure, heterodimer of a B chain and an A chain linked by two disulfide bonds.

The protein resides in the secreted. Insulin decreases blood glucose concentration. It increases cell permeability to monosaccharides, amino acids and fatty acids. It accelerates glycolysis, the pentose phosphate cycle, and glycogen synthesis in liver. The polypeptide is Insulin (INS) (Pongo pygmaeus (Bornean orangutan)).